Reading from the N-terminus, the 344-residue chain is Anthranilate phosphoribosyltransferase 2 (344 aa).

5-phospho-alpha-D-ribose 1-diphosphate is bound by residues G81, 84-85, T89, 91-94, 109-117, and A121; these read GD, NIST, and KHGNRALSS. G81 serves as a coordination point for anthranilate. S93 lines the Mg(2+) pocket. Residue N112 participates in anthranilate binding. Residue R167 coordinates anthranilate. Residues D226 and E227 each coordinate Mg(2+).

This sequence belongs to the anthranilate phosphoribosyltransferase family. Homodimer. Mg(2+) is required as a cofactor.

The enzyme catalyses N-(5-phospho-beta-D-ribosyl)anthranilate + diphosphate = 5-phospho-alpha-D-ribose 1-diphosphate + anthranilate. The protein operates within amino-acid biosynthesis; L-tryptophan biosynthesis; L-tryptophan from chorismate: step 2/5. Catalyzes the transfer of the phosphoribosyl group of 5-phosphorylribose-1-pyrophosphate (PRPP) to anthranilate to yield N-(5'-phosphoribosyl)-anthranilate (PRA). The protein is Anthranilate phosphoribosyltransferase 2 of Ralstonia nicotianae (strain ATCC BAA-1114 / GMI1000) (Ralstonia solanacearum).